A 520-amino-acid polypeptide reads, in one-letter code: GMP synthase [glutamine-hydrolyzing] (520 aa).

Residues 4-202 (KILILDFGSQ…VHDICGCGSD (199 aa)) form the Glutamine amidotransferase type-1 domain. Cysteine 81 serves as the catalytic Nucleophile. Active-site residues include histidine 176 and glutamate 178. In terms of domain architecture, GMPS ATP-PPase spans 203–395 (WNMPDYVEEA…LGLPHDMVYR (193 aa)). 230 to 236 (SGGVDSS) lines the ATP pocket.

As to quaternary structure, homodimer.

It carries out the reaction XMP + L-glutamine + ATP + H2O = GMP + L-glutamate + AMP + diphosphate + 2 H(+). Its pathway is purine metabolism; GMP biosynthesis; GMP from XMP (L-Gln route): step 1/1. Its function is as follows. Catalyzes the synthesis of GMP from XMP. The sequence is that of GMP synthase [glutamine-hydrolyzing] from Thiobacillus denitrificans (strain ATCC 25259 / T1).